A 192-amino-acid polypeptide reads, in one-letter code: Adenylate kinase (192 aa).

Position 10 to 18 (10 to 18) interacts with ATP; the sequence is GVPGVGSTT.

It belongs to the archaeal adenylate kinase family. In terms of assembly, monomer.

It localises to the cytoplasm. It carries out the reaction AMP + ATP = 2 ADP. In Methanococcus voltae, this protein is Adenylate kinase (adkA).